Consider the following 167-residue polypeptide: NADH-quinone oxidoreductase subunit B (167 aa).

Residues C40, C41, C105, and C134 each contribute to the [4Fe-4S] cluster site.

Belongs to the complex I 20 kDa subunit family. As to quaternary structure, NDH-1 is composed of 14 different subunits. Subunits NuoB, C, D, E, F, and G constitute the peripheral sector of the complex. [4Fe-4S] cluster serves as cofactor.

The protein localises to the cell inner membrane. The catalysed reaction is a quinone + NADH + 5 H(+)(in) = a quinol + NAD(+) + 4 H(+)(out). NDH-1 shuttles electrons from NADH, via FMN and iron-sulfur (Fe-S) centers, to quinones in the respiratory chain. The immediate electron acceptor for the enzyme in this species is believed to be ubiquinone. Couples the redox reaction to proton translocation (for every two electrons transferred, four hydrogen ions are translocated across the cytoplasmic membrane), and thus conserves the redox energy in a proton gradient. The protein is NADH-quinone oxidoreductase subunit B of Campylobacter jejuni (strain RM1221).